The primary structure comprises 418 residues: L-glutamine:2-deoxy-scyllo-inosose aminotransferase (418 aa).

Residue lysine 192 is modified to N6-(pyridoxal phosphate)lysine.

It belongs to the DegT/DnrJ/EryC1 family. L-glutamine:2-deoxy-scyllo-inosose/scyllo-inosose aminotransferase subfamily. The cofactor is pyridoxal 5'-phosphate.

It catalyses the reaction 2-deoxy-L-scyllo-inosose + L-glutamine = 2-deoxy-scyllo-inosamine + 2-oxoglutaramate. The catalysed reaction is 3-amino-2,3-dideoxy-scyllo-inosose + L-glutamine = 2-deoxystreptamine + 2-oxoglutaramate. The protein operates within metabolic intermediate biosynthesis; 2-deoxystreptamine biosynthesis; 2-deoxystreptamine from D-glucose 6-phosphate: step 2/4. It participates in metabolic intermediate biosynthesis; 2-deoxystreptamine biosynthesis; 2-deoxystreptamine from D-glucose 6-phosphate: step 4/4. Its pathway is antibiotic biosynthesis; butirosin biosynthesis. Catalyzes the PLP-dependent transamination of 2-deoxy-scyllo-inosose (2-DOI) to form 2-deoxy-scyllo-inosamine (2-DOIA) using L-glutamine as the amino donor. Also catalyzes the transamination of 3-amino-2,3-dideoxy-scyllo-inosose (keto-2-DOIA) into 2-deoxystreptamine (2-DOS). This Niallia circulans (Bacillus circulans) protein is L-glutamine:2-deoxy-scyllo-inosose aminotransferase (btrR).